A 55-amino-acid polypeptide reads, in one-letter code: uncharacterized protein (55 aa).

Transmembrane regions (helical) follow at residues 2 to 19 and 24 to 46; these read VIGL…SFIA and LLSI…FRYF.

The protein localises to the cell membrane. This is an uncharacterized protein from Alkalihalophilus pseudofirmus (strain ATCC BAA-2126 / JCM 17055 / OF4) (Bacillus pseudofirmus).